Here is a 1212-residue protein sequence, read N- to C-terminus: Histone demethylase UTY (1212 aa).

TPR repeat units lie at residues 88-121 (SDFF…QTDY), 125-158 (AAFL…DPNF), 165-193 (HLRL…IDCN), 200-233 (VEIQ…ESLP), 245-278 (GWMH…DPNS), 279-312 (GQSW…SEAS), 313-346 (ADTW…DHGH), and 347-380 (AAAW…KSCN). Positions 530 to 539 (FTKESKDSRS) are enriched in basic and acidic residues. The interval 530-555 (FTKESKDSRSKSLTSKTSRKDRDTSN) is disordered. At threonine 752 the chain carries Phosphothreonine. A disordered region spans residues 865–886 (RRTQVKDYSDNESTCSDNSGRR). Residues 907-1070 (KWKLQLHELT…YKLAVERYEW (164 aa)) form the JmjC domain. Residues histidine 958, glutamate 960, and histidine 1038 each contribute to the Fe cation site. 4 residues coordinate Zn(2+): cysteine 1143, cysteine 1146, cysteine 1170, and cysteine 1173.

This sequence belongs to the UTX family. Binds TLE1 and TLE2. L-ascorbate is required as a cofactor. Requires Fe(2+) as cofactor.

The protein localises to the nucleus. The enzyme catalyses N(6),N(6),N(6)-trimethyl-L-lysyl(27)-[histone H3] + 2 2-oxoglutarate + 2 O2 = N(6)-methyl-L-lysyl(27)-[histone H3] + 2 formaldehyde + 2 succinate + 2 CO2. Male-specific histone demethylase that catalyzes trimethylated 'Lys-27' (H3K27me3) demethylation in histone H3. Has relatively low KDM activity. This Mus musculus (Mouse) protein is Histone demethylase UTY (Uty).